The primary structure comprises 356 residues: Phosphotriesterase-related protein (356 aa).

Residues His23, His25, Glu175, His207, His236, and Asp304 each contribute to the a divalent metal cation site.

It belongs to the metallo-dependent hydrolases superfamily. Phosphotriesterase family. It depends on a divalent metal cation as a cofactor.

The chain is Phosphotriesterase-related protein from Aedes aegypti (Yellowfever mosquito).